A 162-amino-acid chain; its full sequence is Probable E3 ubiquitin-protein ligase XERICO (162 aa).

A helical transmembrane segment spans residues 12 to 28 (GMLCVILVNTALSISIV). The RING-type; atypical zinc-finger motif lies at 103 to 145 (CSVCLSKFQGDSEINKLKCGHLFHKTCLEKWIDYWNITCPLCR).

As to quaternary structure, interacts with UBC8 and TULP9. Ubiquitous. Higher expression in actively growing tissues.

The protein resides in the membrane. The enzyme catalyses S-ubiquitinyl-[E2 ubiquitin-conjugating enzyme]-L-cysteine + [acceptor protein]-L-lysine = [E2 ubiquitin-conjugating enzyme]-L-cysteine + N(6)-ubiquitinyl-[acceptor protein]-L-lysine.. Its pathway is protein modification; protein ubiquitination. Function on abscisic acid homeostasis at post-translational level, probably through ubiquitin/proteasome-dependent substrate-specific degradation. The polypeptide is Probable E3 ubiquitin-protein ligase XERICO (XERICO) (Arabidopsis thaliana (Mouse-ear cress)).